The following is a 134-amino-acid chain: Protein E6 (134 aa).

2 zinc fingers span residues 15-51 and 88-124; these read CLQC…CQIC and CYYC…CYSC.

This sequence belongs to the papillomaviridae E6 protein family. Forms homodimers. Interacts with ubiquitin-protein ligase UBE3A/E6-AP; this interaction stimulates UBE3A ubiquitin activity. Interacts with host BAK1.

It localises to the host cytoplasm. The protein localises to the host nucleus. In terms of biological role, plays a major role in the induction and maintenance of cellular transformation. E6 associates with host UBE3A/E6-AP ubiquitin-protein ligase and modulates its activity. Protects host keratinocytes from apoptosis by mediating the degradation of host BAK1. May also inhibit host immune response. This Bos taurus (Bovine) protein is Protein E6.